Here is a 256-residue protein sequence, read N- to C-terminus: Small ribosomal subunit protein uS2 (256 aa).

The protein belongs to the universal ribosomal protein uS2 family.

This chain is Small ribosomal subunit protein uS2, found in Streptococcus agalactiae serotype Ia (strain ATCC 27591 / A909 / CDC SS700).